The sequence spans 485 residues: Eukaryotic translation initiation factor 3 subunit E (485 aa).

One can recognise a PCI domain in the interval 219 to 391 (NQPDGPDGIV…GEIHITKPVT (173 aa)). A disordered region spans residues 444-485 (QGGGKSNKKGDYKKGDYKKGGDFKKGGDFKKGGDHKKRAWVK). The segment covering 451–475 (KKGDYKKGDYKKGGDFKKGGDFKKG) has biased composition (basic and acidic residues). The span at 476–485 (GDHKKRAWVK) shows a compositional bias: basic residues.

It belongs to the eIF-3 subunit E family. Component of the eukaryotic translation initiation factor 3 (eIF-3) complex.

It is found in the cytoplasm. Functionally, component of the eukaryotic translation initiation factor 3 (eIF-3) complex, which is involved in protein synthesis of a specialized repertoire of mRNAs and, together with other initiation factors, stimulates binding of mRNA and methionyl-tRNAi to the 40S ribosome. The eIF-3 complex specifically targets and initiates translation of a subset of mRNAs involved in cell proliferation. In Monosiga brevicollis (Choanoflagellate), this protein is Eukaryotic translation initiation factor 3 subunit E.